Here is a 163-residue protein sequence, read N- to C-terminus: tRNA-acetylating toxin 2 (163 aa).

Acetyl-CoA-binding residues include Leu89, Val91, His96, Gly97, Gln98, Gly99, Ala101, Arg102, and Glu132. Tyr137 is an active-site residue. Residue Arg139 participates in acetyl-CoA binding.

This sequence belongs to the acetyltransferase family. GNAT subfamily. In terms of assembly, homodimer (in absence of antitoxin). Forms a complex with cognate antitoxin TacA2. Forms a 4:2 antitoxin:toxin complex with cognate antitoxin TacA2.

It catalyses the reaction glycyl-tRNA(Gly) + acetyl-CoA = N-acetylglycyl-tRNA(Gly) + CoA + H(+). In terms of biological role, toxic component of a type II toxin-antitoxin (TA) system. Acetylates tRNA and inhibits translation. Acetylates exclusively Gly in situ. Overexpression during the lag phase of a tacA2-tacT2 deletion strain leads to very small increase in persister cells in the presence of cefotaxime but no detectable growth phenotype in absence of antibiotics. Compared to a protein with a single amino acid change (TacT2 from S.enterica NCTC 13349, Glu-29 is Lys in NCTC 13349) this protein binds tRNA very poorly and acetylates tRNA very poorly. Persister cell formation is neutralized by cognate antitoxin TacA2. Neutralized only by cognate antitoxin TacA2 (A8), but not by TacA1 or TacA3. Plays a role in persister cell formation. The TacA2-TacT2 complex both represses and derepresses expression of its own operon. The polypeptide is tRNA-acetylating toxin 2 (Salmonella typhimurium (strain 14028s / SGSC 2262)).